A 103-amino-acid chain; its full sequence is uncharacterized protein (103 aa).

2 helical membrane-spanning segments follow: residues L13–L33 and F77–F97.

It localises to the endoplasmic reticulum membrane. This is an uncharacterized protein from Schizosaccharomyces pombe (strain 972 / ATCC 24843) (Fission yeast).